The sequence spans 130 residues: MQDLISLEIITPLGMIYQGDARLVVLPGSEGEFGVLKGHASLISSLKAGIIDIEKSDSTHELVAIDSGHAKVSETKVSVLAKGAVWVGGNSDSEIAKRLEEAKDLIKSMSSDSIALASTFAKMDNNVRQK.

This sequence belongs to the ATPase epsilon chain family. As to quaternary structure, F-type ATPases have 2 components, CF(1) - the catalytic core - and CF(0) - the membrane proton channel. CF(1) has five subunits: alpha(3), beta(3), gamma(1), delta(1), epsilon(1). CF(0) has three main subunits: a, b and c.

It localises to the cell inner membrane. Its function is as follows. Produces ATP from ADP in the presence of a proton gradient across the membrane. In Campylobacter lari (strain RM2100 / D67 / ATCC BAA-1060), this protein is ATP synthase epsilon chain.